The primary structure comprises 262 residues: Acyl-[acyl-carrier-protein]--UDP-N-acetylglucosamine O-acyltransferase (262 aa).

The protein belongs to the transferase hexapeptide repeat family. LpxA subfamily. Homotrimer.

Its subcellular location is the cytoplasm. The enzyme catalyses a (3R)-hydroxyacyl-[ACP] + UDP-N-acetyl-alpha-D-glucosamine = a UDP-3-O-[(3R)-3-hydroxyacyl]-N-acetyl-alpha-D-glucosamine + holo-[ACP]. The protein operates within glycolipid biosynthesis; lipid IV(A) biosynthesis; lipid IV(A) from (3R)-3-hydroxytetradecanoyl-[acyl-carrier-protein] and UDP-N-acetyl-alpha-D-glucosamine: step 1/6. Involved in the biosynthesis of lipid A, a phosphorylated glycolipid that anchors the lipopolysaccharide to the outer membrane of the cell. This chain is Acyl-[acyl-carrier-protein]--UDP-N-acetylglucosamine O-acyltransferase, found in Janthinobacterium sp. (strain Marseille) (Minibacterium massiliensis).